Here is a 71-residue protein sequence, read N- to C-terminus: Large ribosomal subunit protein bL31 (71 aa).

Zn(2+) is bound by residues cysteine 16, cysteine 18, cysteine 37, and cysteine 40.

It belongs to the bacterial ribosomal protein bL31 family. Type A subfamily. In terms of assembly, part of the 50S ribosomal subunit. Zn(2+) serves as cofactor.

In terms of biological role, binds the 23S rRNA. This is Large ribosomal subunit protein bL31 from Aeromonas salmonicida (strain A449).